Reading from the N-terminus, the 281-residue chain is Proteasome subunit beta (281 aa).

The propeptide at 1 to 53 is removed in mature form; by autocatalysis; sequence MEANTRSTGRLPAAFLTPGSSSFMDFLSDHQPELLPGKRQLPPTQGVIEAPHG. The active-site Nucleophile is threonine 54.

It belongs to the peptidase T1B family. As to quaternary structure, the 20S proteasome core is composed of 14 alpha and 14 beta subunits that assemble into four stacked heptameric rings, resulting in a barrel-shaped structure. The two inner rings, each composed of seven catalytic beta subunits, are sandwiched by two outer rings, each composed of seven alpha subunits. The catalytic chamber with the active sites is on the inside of the barrel. Has a gated structure, the ends of the cylinder being occluded by the N-termini of the alpha-subunits. Is capped by the proteasome-associated ATPase, ARC.

Its subcellular location is the cytoplasm. It catalyses the reaction Cleavage of peptide bonds with very broad specificity.. It functions in the pathway protein degradation; proteasomal Pup-dependent pathway. With respect to regulation, the formation of the proteasomal ATPase ARC-20S proteasome complex, likely via the docking of the C-termini of ARC into the intersubunit pockets in the alpha-rings, may trigger opening of the gate for substrate entry. Interconversion between the open-gate and close-gate conformations leads to a dynamic regulation of the 20S proteasome proteolysis activity. In terms of biological role, component of the proteasome core, a large protease complex with broad specificity involved in protein degradation. The sequence is that of Proteasome subunit beta from Streptomyces scabiei (strain 87.22).